Reading from the N-terminus, the 138-residue chain is Thyrotropin subunit beta (138 aa).

The first 20 residues, 1 to 20, serve as a signal peptide directing secretion; it reads MTAIFLMSVLFGLACGQAMS. 6 cysteine pairs are disulfide-bonded: cysteine 22-cysteine 72, cysteine 36-cysteine 87, cysteine 39-cysteine 125, cysteine 47-cysteine 103, cysteine 51-cysteine 105, and cysteine 108-cysteine 115. N-linked (GlcNAc...) asparagine glycosylation is present at asparagine 43. Positions 133-138 are excised as a propeptide; it reads VVGLSI.

It belongs to the glycoprotein hormones subunit beta family. Heterodimer of a common alpha chain and a unique beta chain which confers biological specificity to thyrotropin, lutropin, follitropin and gonadotropin.

The protein localises to the secreted. In terms of biological role, indispensable for the control of thyroid structure and metabolism. This chain is Thyrotropin subunit beta (TSHB), found in Lama glama (Llama).